We begin with the raw amino-acid sequence, 346 residues long: tRNA N6-adenosine threonylcarbamoyltransferase (346 aa).

Fe cation contacts are provided by His111 and His115. Substrate is bound by residues 134-138, Asp167, Gly180, and Asn279; that span reads LVSGG. Residue Asp307 participates in Fe cation binding.

The protein belongs to the KAE1 / TsaD family. Requires Fe(2+) as cofactor.

The protein resides in the cytoplasm. It carries out the reaction L-threonylcarbamoyladenylate + adenosine(37) in tRNA = N(6)-L-threonylcarbamoyladenosine(37) in tRNA + AMP + H(+). Its function is as follows. Required for the formation of a threonylcarbamoyl group on adenosine at position 37 (t(6)A37) in tRNAs that read codons beginning with adenine. Is involved in the transfer of the threonylcarbamoyl moiety of threonylcarbamoyl-AMP (TC-AMP) to the N6 group of A37, together with TsaE and TsaB. TsaD likely plays a direct catalytic role in this reaction. This chain is tRNA N6-adenosine threonylcarbamoyltransferase, found in Burkholderia cenocepacia (strain HI2424).